An 86-amino-acid chain; its full sequence is Small ribosomal subunit protein uS15 (86 aa).

It belongs to the universal ribosomal protein uS15 family. In terms of assembly, part of the 30S ribosomal subunit. Forms a bridge to the 50S subunit in the 70S ribosome, contacting the 23S rRNA.

Its function is as follows. One of the primary rRNA binding proteins, it binds directly to 16S rRNA where it helps nucleate assembly of the platform of the 30S subunit by binding and bridging several RNA helices of the 16S rRNA. Functionally, forms an intersubunit bridge (bridge B4) with the 23S rRNA of the 50S subunit in the ribosome. This is Small ribosomal subunit protein uS15 from Mycoplasma genitalium (strain ATCC 33530 / DSM 19775 / NCTC 10195 / G37) (Mycoplasmoides genitalium).